The chain runs to 179 residues: Ribosome maturation factor RimM (179 aa).

Positions E99–L174 constitute a PRC barrel domain.

Belongs to the RimM family. In terms of assembly, binds ribosomal protein uS19.

The protein resides in the cytoplasm. In terms of biological role, an accessory protein needed during the final step in the assembly of 30S ribosomal subunit, possibly for assembly of the head region. Essential for efficient processing of 16S rRNA. May be needed both before and after RbfA during the maturation of 16S rRNA. It has affinity for free ribosomal 30S subunits but not for 70S ribosomes. The sequence is that of Ribosome maturation factor RimM from Natranaerobius thermophilus (strain ATCC BAA-1301 / DSM 18059 / JW/NM-WN-LF).